The sequence spans 246 residues: Pyridoxine 5'-phosphate synthase (246 aa).

3-amino-2-oxopropyl phosphate contacts are provided by Asn-8 and Arg-19. Catalysis depends on His-44, which acts as the Proton acceptor. Arg-46 and His-51 together coordinate 1-deoxy-D-xylulose 5-phosphate. The active-site Proton acceptor is Glu-76. Thr-106 contacts 1-deoxy-D-xylulose 5-phosphate. His-198 (proton donor) is an active-site residue. Residues Asp-199 and Gly-221–His-222 contribute to the 3-amino-2-oxopropyl phosphate site.

It belongs to the PNP synthase family. In terms of assembly, homooctamer; tetramer of dimers.

It is found in the cytoplasm. The catalysed reaction is 3-amino-2-oxopropyl phosphate + 1-deoxy-D-xylulose 5-phosphate = pyridoxine 5'-phosphate + phosphate + 2 H2O + H(+). It participates in cofactor biosynthesis; pyridoxine 5'-phosphate biosynthesis; pyridoxine 5'-phosphate from D-erythrose 4-phosphate: step 5/5. Catalyzes the complicated ring closure reaction between the two acyclic compounds 1-deoxy-D-xylulose-5-phosphate (DXP) and 3-amino-2-oxopropyl phosphate (1-amino-acetone-3-phosphate or AAP) to form pyridoxine 5'-phosphate (PNP) and inorganic phosphate. The protein is Pyridoxine 5'-phosphate synthase of Brucella abortus (strain S19).